Reading from the N-terminus, the 983-residue chain is Bifunctional glutamine synthetase adenylyltransferase/adenylyl-removing enzyme (983 aa).

An adenylyl removase region spans residues 1–468 (MTVENAKALF…KQYAALFEQA (468 aa)). Residues 473-983 (AASGNLVFTG…FDKLVGHGAD (511 aa)) are adenylyl transferase.

It belongs to the GlnE family. Mg(2+) serves as cofactor.

It carries out the reaction [glutamine synthetase]-O(4)-(5'-adenylyl)-L-tyrosine + phosphate = [glutamine synthetase]-L-tyrosine + ADP. The catalysed reaction is [glutamine synthetase]-L-tyrosine + ATP = [glutamine synthetase]-O(4)-(5'-adenylyl)-L-tyrosine + diphosphate. Its function is as follows. Involved in the regulation of glutamine synthetase GlnA, a key enzyme in the process to assimilate ammonia. When cellular nitrogen levels are high, the C-terminal adenylyl transferase (AT) inactivates GlnA by covalent transfer of an adenylyl group from ATP to specific tyrosine residue of GlnA, thus reducing its activity. Conversely, when nitrogen levels are low, the N-terminal adenylyl removase (AR) activates GlnA by removing the adenylyl group by phosphorolysis, increasing its activity. The regulatory region of GlnE binds the signal transduction protein PII (GlnB) which indicates the nitrogen status of the cell. The chain is Bifunctional glutamine synthetase adenylyltransferase/adenylyl-removing enzyme from Brucella melitensis biotype 1 (strain ATCC 23456 / CCUG 17765 / NCTC 10094 / 16M).